A 460-amino-acid polypeptide reads, in one-letter code: Probable asparagine--tRNA ligase, mitochondrial (460 aa).

The protein belongs to the class-II aminoacyl-tRNA synthetase family.

It localises to the mitochondrion matrix. It carries out the reaction tRNA(Asn) + L-asparagine + ATP = L-asparaginyl-tRNA(Asn) + AMP + diphosphate + H(+). This Dictyostelium discoideum (Social amoeba) protein is Probable asparagine--tRNA ligase, mitochondrial (asnS2).